The sequence spans 588 residues: A-type ATP synthase subunit A 3 (588 aa).

234–241 is an ATP binding site; the sequence is GPFGSGKT.

Belongs to the ATPase alpha/beta chains family. Has multiple subunits with at least A(3), B(3), C, D, E, F, H, I and proteolipid K(x).

It is found in the cell membrane. The enzyme catalyses ATP + H2O + 4 H(+)(in) = ADP + phosphate + 5 H(+)(out). Its function is as follows. Component of the A-type ATP synthase that produces ATP from ADP in the presence of a proton gradient across the membrane. The A chain is the catalytic subunit. This chain is A-type ATP synthase subunit A 3, found in Methanospirillum hungatei JF-1 (strain ATCC 27890 / DSM 864 / NBRC 100397 / JF-1).